The chain runs to 30 residues: Cysteine-rich venom protein annuliferin-a (30 aa).

This sequence belongs to the CRISP family. In terms of processing, contains 8 disulfide bonds. As to expression, expressed by the venom gland.

Its subcellular location is the secreted. In terms of biological role, inhibits calcium-activated potassium channels (KCa), voltage-gated potassium channel (Kv), and the calcium release channel/ryanodine receptor (RyR). The polypeptide is Cysteine-rich venom protein annuliferin-a (Naja annulifera (Banded Egyptian cobra)).